Reading from the N-terminus, the 238-residue chain is DNA repair protein RecO (238 aa).

Belongs to the RecO family.

Involved in DNA repair and RecF pathway recombination. The chain is DNA repair protein RecO from Anaplasma marginale (strain Florida).